We begin with the raw amino-acid sequence, 622 residues long: MPAIPSHVPEPSRTDPALIRNFCIIAHIDHGKSTLADRMLQLTGVVEQRQMRAQYLDRMDIERERGITIKSQAVRLPWAPSHDKGATHILNMIDTPGHVDFTYEVSRSLAACEGTILLVDAAQGIEAQTLANLYLAMENDLTIIPVLNKIDLPAAQPEKFAEELANLVGCDPDDVLKVSAKTGLGVDVLLDKVVAEVPAPVGVKDAPARAMIFDSVYDSYRGVVTYVRVIDGQLNKRERIRMMSTGATHELLEIGTNSPEMLSADGLGVGEVGYLITGVKDVRQSKVGDTVTSQHKGATEALGGYKDPRPMVFSGLYPLDGSDYPELREALDKLQLNDAALVYEPETSAALGFGFRVGFLGLLHLDVIRERLEREFGLDLIATAPNVVYRVIMEDGTEHTVTNPSEFPEGKINEVYEPVVRATILAPTEFIGSIMELCQTRRGTLLGMDYLSEDRVEIRYTLPLAEIVFDFFDQLKSKTRGYASLDYEPTGEQTSSLVKVDILLHGDKVDAFSAITHKDAAYAYGVRLVAKLRELIPRQAFEVPIQAAIGSRVIARETIRAIRKDVLAKCYGGDISRKRKLLEKQKEGKKRMKMVGSVEVPQEAFIAVLSSDDSAGSGKGKK.

The tr-type G domain occupies 17-201; sequence ALIRNFCIIA…KVVAEVPAPV (185 aa). GTP is bound by residues 29-34 and 148-151; these read DHGKST and NKID.

It belongs to the TRAFAC class translation factor GTPase superfamily. Classic translation factor GTPase family. LepA subfamily.

The protein resides in the cell membrane. The catalysed reaction is GTP + H2O = GDP + phosphate + H(+). Functionally, required for accurate and efficient protein synthesis under certain stress conditions. May act as a fidelity factor of the translation reaction, by catalyzing a one-codon backward translocation of tRNAs on improperly translocated ribosomes. Back-translocation proceeds from a post-translocation (POST) complex to a pre-translocation (PRE) complex, thus giving elongation factor G a second chance to translocate the tRNAs correctly. Binds to ribosomes in a GTP-dependent manner. The polypeptide is Elongation factor 4 (Streptomyces coelicolor (strain ATCC BAA-471 / A3(2) / M145)).